The primary structure comprises 342 residues: Serpentine receptor class delta-33 (342 aa).

Helical transmembrane passes span 26-46 (IFVI…LLLL), 62-82 (IFLA…VTSM), 112-132 (YVGI…SMIY), 148-168 (IILC…CSNI), 205-225 (LIIL…VMYW), 261-281 (IIPL…QLGF), and 287-307 (YSYF…VVTI).

This sequence belongs to the nematode receptor-like protein srd family.

The protein resides in the membrane. The sequence is that of Serpentine receptor class delta-33 (srd-33) from Caenorhabditis elegans.